A 700-amino-acid chain; its full sequence is Acyl-coenzyme A oxidase 3 (700 aa).

This sequence belongs to the acyl-CoA oxidase family. Heteropentamer composed of five different subunits. FAD serves as cofactor.

Its subcellular location is the peroxisome. It carries out the reaction a 2,3-saturated acyl-CoA + O2 = a (2E)-enoyl-CoA + H2O2. It participates in lipid metabolism; peroxisomal fatty acid beta-oxidation. In terms of biological role, oxidizes aliphatic acyl-CoA substrates of different chain lengths such as hexanoyl-CoA, decanoyl-CoA and myristoyl-CoA as well as aromatic/heterocyclic ring-substituted chromogenic substrates, such as furylpropionyl-CoA. Of the above substrates, the efficiency of the enzyme, exhibits the following order: decanoyl-CoA &gt; myristoyl-CoA &gt; hexanoyl-CoA &gt; furyl-propionyl-CoA. In Yarrowia lipolytica (strain CLIB 122 / E 150) (Yeast), this protein is Acyl-coenzyme A oxidase 3 (POX3).